Reading from the N-terminus, the 431-residue chain is Glutamate-1-semialdehyde 2,1-aminomutase (431 aa).

At K267 the chain carries N6-(pyridoxal phosphate)lysine.

This sequence belongs to the class-III pyridoxal-phosphate-dependent aminotransferase family. HemL subfamily. Homodimer. Pyridoxal 5'-phosphate is required as a cofactor.

It localises to the cytoplasm. It catalyses the reaction (S)-4-amino-5-oxopentanoate = 5-aminolevulinate. The protein operates within porphyrin-containing compound metabolism; protoporphyrin-IX biosynthesis; 5-aminolevulinate from L-glutamyl-tRNA(Glu): step 2/2. This Myxococcus xanthus (strain DK1622) protein is Glutamate-1-semialdehyde 2,1-aminomutase.